Here is a 207-residue protein sequence, read N- to C-terminus: Ribosomal RNA small subunit methyltransferase G (207 aa).

S-adenosyl-L-methionine contacts are provided by residues Gly74, Leu79, 125-126 (VE), and Arg140.

The protein belongs to the methyltransferase superfamily. RNA methyltransferase RsmG family.

It is found in the cytoplasm. The catalysed reaction is guanosine(527) in 16S rRNA + S-adenosyl-L-methionine = N(7)-methylguanosine(527) in 16S rRNA + S-adenosyl-L-homocysteine. In terms of biological role, specifically methylates the N7 position of guanine in position 527 of 16S rRNA. The polypeptide is Ribosomal RNA small subunit methyltransferase G (Shewanella pealeana (strain ATCC 700345 / ANG-SQ1)).